We begin with the raw amino-acid sequence, 85 residues long: Large ribosomal subunit protein eL34 (85 aa).

It belongs to the eukaryotic ribosomal protein eL34 family.

This chain is Large ribosomal subunit protein eL34, found in Saccharolobus islandicus (strain M.16.27) (Sulfolobus islandicus).